Here is a 301-residue protein sequence, read N- to C-terminus: Cuticle collagen 1 (301 aa).

Residues 1 to 37 form the signal peptide; it reads METDGRLKAYKFVAYAAVGFSIAAVASVLLTLPMVYS. Residues 79-82 are furin-like endopeptidase recognition region; sequence RTTR. 4 triple-helical region regions span residues 105–134, 153–179, 183–209, and 218–283; these read GPPGPAGAPGKPGKPGRPGAPGTPGTPGKP, GPPGPPGPPGAPGDPGEAGTPGRPGTD, GSPGPRGPPGPAGEAGAPGPAGEPGTP, and GAPG…KGIC. Residues 109–284 are disordered; the sequence is PAGAPGKPGK…GTPGEKGICP (176 aa). Composition is skewed to pro residues over residues 131 to 164 and 184 to 193; these read PGKPPVAPCEPTTPPPCKPCPQGPPGPPGPPGAP and SPGPRGPPGP. The segment covering 194-210 has biased composition (low complexity); that stretch reads AGEAGAPGPAGEPGTPA. The span at 226-258 shows a compositional bias: pro residues; the sequence is SGPPGPPGPPGAPGNDGPPGPPGPKGAPGPDGP.

Belongs to the cuticular collagen family. As to quaternary structure, collagen polypeptide chains are complexed within the cuticle by disulfide bonds and other types of covalent cross-links.

It localises to the secreted. The protein resides in the extracellular space. Its function is as follows. Secreted collagen that forms part of the nematode cuticle, which functions as an exoskeleton and a barrier to protect the worm from its environment. Secretion and subsequent incorporation into the cuticle is likely mediated by bli-4, which probably cleaves at the N-terminal consensus furin cleavage site. The polypeptide is Cuticle collagen 1 (sqt-3) (Caenorhabditis elegans).